A 342-amino-acid chain; its full sequence is MTQFNIPVTMSSSLSIILVILVSLSTAHSELCNPQDKQALLQIKKDLGNPTTLSSWLPTTDCCNRTWLGVLCDTDTQTYRVNNLDLSGLNLPKPYPIPSSLANLPYLNFLYIGGINNLVGPIPPAIAKLTQLHYLYITHTNVSGAIPDFLSQIKTLVTLDFSYNALSGTLPPSISSLPNLVGITFDGNRISGAIPDSYGSFSKLFTSMTISRNRLTGKIPPTFANLNLAFVDLSRNMLEGDASVLFGSDKNTQKIHLAKNSLAFDLGKVGLSKNLNGLDLRNNRIYGTLPQGLTQLKFLHSLNVSFNNLCGEIPQGGNLQRFDVSAYANNKCLCGSPLPACT.

A signal peptide spans 1 to 29; sequence MTQFNIPVTMSSSLSIILVILVSLSTAHS. Intrachain disulfides connect Cys-32/Cys-62 and Cys-63/Cys-72. Residue Asn-64 is glycosylated (N-linked (GlcNAc...) (complex) asparagine). LRR repeat units lie at residues 82–107, 108–132, 133–156, 157–180, 181–205, 206–228, 229–252, 253–275, 276–299, and 300–319; these read NNLD…LPYL, NFLY…LTQL, HYLY…IKTL, VTLD…LPNL, VGIT…SKLF, TSMT…NLNL, AFVD…DKNT, QKIH…SKNL, NGLD…LKFL, and HSLN…GGNL. N-linked (GlcNAc...) (complex) asparagine glycosylation occurs at Asn-141. N-linked (GlcNAc...) asparagine glycosylation is present at Asn-303. 2 disulfides stabilise this stretch: Cys-310-Cys-332 and Cys-334-Cys-341.

The protein belongs to the polygalacturonase-inhibiting protein family. In terms of processing, asn-303 is not glycosylated.

It localises to the secreted. It is found in the cell wall. Its subcellular location is the membrane. Its function is as follows. Inhibitor of fungal polygalacturonase. It is an important factor for plant resistance to phytopathogenic fungi. Inhibits all polygalacturonases (PG) tested, with the exception of PG from F.oxysporum which was only inhibited at 60%. The protein is Polygalacturonase inhibitor 2 (PGIP2) of Phaseolus vulgaris (Kidney bean).